A 93-amino-acid chain; its full sequence is Transcription factor PRE3 (93 aa).

A bHLH domain is found at 6 to 61; that stretch reads SRSRQSSGTSRISEDQINDLIIKLQQLLPELRDSRRSDKVSAARVLQDTCNYIRNL.

In terms of assembly, homodimer. Interacts with BHLH 147, BHLH148, BHLH149, BHLH150 and IBH1. Interacts with SIEL. As to expression, expressed in root and shoot meristems, and young siliques. Low levels detected in all aerial tissues.

It is found in the nucleus. It localises to the cytoplasm. Functionally, atypical and probable non DNA-binding bHLH transcription factor required for MONOPTEROS-dependent root initiation in embryo. Promotes the correct definition of the hypophysis cell division plane. Transcriptionally controlled by MONOPTEROS. Moves from its site of synthesis in pro-embryos cells into the hypophysis. Regulates brassinosteroid (BR) signaling by sequestering negative BR signaling components. May function as positive regulator of gibberellin signaling. May play a role in the regulation of light signaling and possibly auxin signaling. This chain is Transcription factor PRE3 (PRE3), found in Arabidopsis thaliana (Mouse-ear cress).